Reading from the N-terminus, the 499-residue chain is Salviol synthase (499 aa).

A helical membrane pass occupies residues 4–24 (HIPSLVLCISFFIFFKIVSKL). Heme is bound at residue Cys436.

Belongs to the cytochrome P450 family. It depends on heme as a cofactor. Expressed in leaf glandular trichomes.

Its subcellular location is the membrane. It carries out the reaction ferruginol + reduced [NADPH--hemoprotein reductase] + O2 = salviol + oxidized [NADPH--hemoprotein reductase] + H2O + H(+). It functions in the pathway secondary metabolite biosynthesis; terpenoid biosynthesis. In terms of biological role, monooxygenase involved in the biosynthesis of labdane-related diterpenes natural products. Catalyzes the oxidation of ferruginol to produce salviol. Salviol is an intermediate in the biosynthesis of carnosate, a potent antioxidant. This is Salviol synthase from Salvia pomifera (Apple sage).